The sequence spans 261 residues: Taurine import ATP-binding protein TauB (261 aa).

One can recognise an ABC transporter domain in the interval 4-233 (LTADRVSVRY…RWRAGDSARA (230 aa)). Residue 38–45 (GPSGCGKT) participates in ATP binding.

Belongs to the ABC transporter superfamily. Taurine importer (TC 3.A.1.17.1) family. In terms of assembly, the complex is composed of two ATP-binding proteins (TauB), two transmembrane proteins (TauC) and a solute-binding protein (TauA).

The protein localises to the cell inner membrane. It carries out the reaction taurine(out) + ATP + H2O = taurine(in) + ADP + phosphate + H(+). Its function is as follows. Part of the ABC transporter complex TauABC involved in taurine import. Responsible for energy coupling to the transport system. The chain is Taurine import ATP-binding protein TauB from Chromobacterium violaceum (strain ATCC 12472 / DSM 30191 / JCM 1249 / CCUG 213 / NBRC 12614 / NCIMB 9131 / NCTC 9757 / MK).